The primary structure comprises 343 residues: Mas-related G-protein coupled receptor member F (343 aa).

At methionine 1–proline 44 the chain is on the extracellular side. Asparagine 4 carries N-linked (GlcNAc...) asparagine glycosylation. The helical transmembrane segment at alanine 45 to leucine 66 threads the bilayer. Over tryptophan 67–phenylalanine 82 the chain is Cytoplasmic. A helical membrane pass occupies residues leucine 83 to threonine 104. Residues glycine 105–glycine 123 lie on the Extracellular side of the membrane. Residues leucine 124–serine 144 form a helical membrane-spanning segment. Over valine 145–serine 160 the chain is Cytoplasmic. A helical membrane pass occupies residues alanine 161 to phenylalanine 181. Residues cysteine 182–aspartate 198 lie on the Extracellular side of the membrane. The helical transmembrane segment at isoleucine 199–leucine 220 threads the bilayer. Topologically, residues isoleucine 221–isoleucine 241 are cytoplasmic. A helical membrane pass occupies residues leucine 242 to tryptophan 263. Residues valine 264 to glutamate 273 are Extracellular-facing. A helical membrane pass occupies residues tyrosine 274–alanine 294. Over glycine 295–serine 343 the chain is Cytoplasmic. Residues leucine 320–serine 343 are disordered.

Belongs to the G-protein coupled receptor 1 family. Mas subfamily.

It is found in the cell membrane. In terms of biological role, orphan receptor. May bind to a neuropeptide and may regulate nociceptor function and/or development, including the sensation or modulation of pain. The protein is Mas-related G-protein coupled receptor member F (MRGPRF) of Homo sapiens (Human).